Here is a 264-residue protein sequence, read N- to C-terminus: MVKSHIGSWILVLFVAMWSDVALCKKRPKPGGGWNTGGSRYPGQGSPGGNRYPSQGGGGWGQPHGGGWGQPHGGGWGQPHGGGWGQPHGGGWGQPHGGGGWGQGGTHGQWNKPSKPKTNMKHVAGAAAAGAVVGGLGGYMLGSAMSRPLIHFGSDYEDRYYRENMYRYPNQVYYRPVDQYSNQNNFVHDCVNITVKQHTVTTTTKGENFTETDIKMMERVVEQMCITQYQRESEAYYQRGASVILFSSPPVILLISFLIFLIVG.

A signal peptide spans 1-24 (MVKSHIGSWILVLFVAMWSDVALC). The tract at residues 25-241 (KKRPKPGGGW…ESEAYYQRGA (217 aa)) is interaction with GRB2, ERI3 and SYN1. Residues 28-118 (PKPGGGWNTG…QWNKPSKPKT (91 aa)) are disordered. Tandem repeats lie at residues 54–62 (SQGGGGWGQ), 63–70 (PHGGGWGQ), 71–78 (PHGGGWGQ), 79–86 (PHGGGWGQ), 87–94 (PHGGGWGQ), and 95–103 (PHGGGGWGQ). Positions 54–103 (SQGGGGWGQPHGGGWGQPHGGGWGQPHGGGWGQPHGGGWGQPHGGGGWGQ) are 6 X 8 AA tandem repeats of P-H-G-G-G-W-G-Q. A compositionally biased stretch (gly residues) spans 55 to 107 (QGGGGWGQPHGGGWGQPHGGGWGQPHGGGWGQPHGGGWGQPHGGGGWGQGGTH). Cu(2+) contacts are provided by His-72, Gly-73, Gly-74, His-80, Gly-81, Gly-82, His-88, Gly-89, Gly-90, His-96, Gly-98, and Gly-99. A disulfide bond links Cys-190 and Cys-225. Residues Asn-192 and Asn-208 are each glycosylated (N-linked (GlcNAc...) asparagine). The GPI-anchor amidated alanine moiety is linked to residue Ala-241. Residues 242-264 (SVILFSSPPVILLISFLIFLIVG) constitute a propeptide, removed in mature form.

It belongs to the prion family. As to quaternary structure, monomer and homodimer. Has a tendency to aggregate into amyloid fibrils containing a cross-beta spine, formed by a steric zipper of superposed beta-strands. Soluble oligomers may represent an intermediate stage on the path to fibril formation. Copper binding may promote oligomerization. Interacts with GRB2, APP, ERI3/PRNPIP and SYN1. Mislocalized cytosolically exposed PrP interacts with MGRN1; this interaction alters MGRN1 subcellular location and causes lysosomal enlargement. Interacts with KIAA1191.

It localises to the cell membrane. The protein resides in the golgi apparatus. Its function is as follows. Its primary physiological function is unclear. Has cytoprotective activity against internal or environmental stresses. May play a role in neuronal development and synaptic plasticity. May be required for neuronal myelin sheath maintenance. May play a role in iron uptake and iron homeostasis. Soluble oligomers are toxic to cultured neuroblastoma cells and induce apoptosis (in vitro). Association with GPC1 (via its heparan sulfate chains) targets PRNP to lipid rafts. Also provides Cu(2+) or Zn(2+) for the ascorbate-mediated GPC1 deaminase degradation of its heparan sulfate side chains. This chain is Major prion protein 1, found in Tragelaphus strepsiceros (Greater kudu).